Here is an 88-residue protein sequence, read N- to C-terminus: Small ribosomal subunit protein uS17 (88 aa).

This sequence belongs to the universal ribosomal protein uS17 family. Part of the 30S ribosomal subunit.

Functionally, one of the primary rRNA binding proteins, it binds specifically to the 5'-end of 16S ribosomal RNA. The protein is Small ribosomal subunit protein uS17 of Leuconostoc mesenteroides subsp. mesenteroides (strain ATCC 8293 / DSM 20343 / BCRC 11652 / CCM 1803 / JCM 6124 / NCDO 523 / NBRC 100496 / NCIMB 8023 / NCTC 12954 / NRRL B-1118 / 37Y).